Here is a 273-residue protein sequence, read N- to C-terminus: Urease accessory protein UreD (273 aa).

Belongs to the UreD family. In terms of assembly, ureD, UreF and UreG form a complex that acts as a GTP-hydrolysis-dependent molecular chaperone, activating the urease apoprotein by helping to assemble the nickel containing metallocenter of UreC. The UreE protein probably delivers the nickel.

The protein resides in the cytoplasm. Required for maturation of urease via the functional incorporation of the urease nickel metallocenter. The chain is Urease accessory protein UreD from Rhizobium johnstonii (strain DSM 114642 / LMG 32736 / 3841) (Rhizobium leguminosarum bv. viciae).